Here is a 113-residue protein sequence, read N- to C-terminus: Probable UPF0122 protein (113 aa).

The protein belongs to the UPF0122 family.

Its function is as follows. Might take part in the signal recognition particle (SRP) pathway. This is inferred from the conservation of its genetic proximity to ftsY/ffh. May be a regulatory protein. This chain is Probable UPF0122 protein, found in Mycoplasma mycoides.